A 241-amino-acid polypeptide reads, in one-letter code: MSSWVEVSLNTPAQLSLPLYLPDDETFASFWPGDNASLLAALQNVLRQEHSGYIYLWAREGAGRSHLLHAACAELSQRGDAVGYVPLDKRTWFVPEVLDGMEHLSLVCIDNIECVAGDELWEMAIFDLYNRILESGKTRLLITGDRPPRQLNLGLPDLASRLDWGQIYKLQPLSDEDKLQALQLRARLRGFELPEDVGRFLLKRLDREMRTLFMTLDQLDHASITAQRKLTIPFVKEILKL.

The protein belongs to the DnaA family. HdA subfamily. The active form seems to be an ADP-bound monomer. Forms the RIDA complex (regulatory inactivation of DnaA) of ATP-DnaA, ADP-Hda and the DNA-loaded beta sliding clamp (dnaN).

Mediates the interaction of DNA replication initiator protein DnaA with DNA polymerase subunit beta sliding clamp (dnaN). Stimulates hydrolysis of ATP-DnaA to ADP-DnaA, rendering DnaA inactive for reinitiation, a process called regulatory inhibition of DnaA or RIDA. In Salmonella agona (strain SL483), this protein is DnaA regulatory inactivator Hda.